A 103-amino-acid polypeptide reads, in one-letter code: Large ribosomal subunit protein bL21 (103 aa).

The protein belongs to the bacterial ribosomal protein bL21 family. In terms of assembly, part of the 50S ribosomal subunit. Contacts protein L20.

Its function is as follows. This protein binds to 23S rRNA in the presence of protein L20. In Thiobacillus denitrificans (strain ATCC 25259 / T1), this protein is Large ribosomal subunit protein bL21.